Consider the following 303-residue polypeptide: US1 protein (303 aa).

The interval 230–284 (IPAPGRPLPRRRPSEGGMRAPRRRSRAPAPARSTAAAATPPRPGDPRAPAARRAG) is disordered. The segment covering 256 to 268 (APAPARSTAAAAT) has biased composition (low complexity).

The protein belongs to the herpesviridae US2 family.

This Equine herpesvirus 1 (strain Kentucky A) (EHV-1) protein is US1 protein (US1).